We begin with the raw amino-acid sequence, 407 residues long: Peptidase T (407 aa).

Residue histidine 82 participates in Zn(2+) binding. The active site involves aspartate 84. Aspartate 143 is a Zn(2+) binding site. Catalysis depends on glutamate 177, which acts as the Proton acceptor. Residues glutamate 178, aspartate 200, and histidine 382 each coordinate Zn(2+).

This sequence belongs to the peptidase M20B family. Zn(2+) is required as a cofactor.

Its subcellular location is the cytoplasm. It carries out the reaction Release of the N-terminal residue from a tripeptide.. Its function is as follows. Cleaves the N-terminal amino acid of tripeptides. This Streptococcus pyogenes serotype M28 (strain MGAS6180) protein is Peptidase T.